Here is a 129-residue protein sequence, read N- to C-terminus: Glycine cleavage system H protein (129 aa).

The Lipoyl-binding domain occupies Thr24–Lys106. Lys65 carries the post-translational modification N6-lipoyllysine.

Belongs to the GcvH family. As to quaternary structure, the glycine cleavage system is composed of four proteins: P, T, L and H. The cofactor is (R)-lipoate.

Its function is as follows. The glycine cleavage system catalyzes the degradation of glycine. The H protein shuttles the methylamine group of glycine from the P protein to the T protein. In Salmonella paratyphi B (strain ATCC BAA-1250 / SPB7), this protein is Glycine cleavage system H protein.